Reading from the N-terminus, the 202-residue chain is Dephospho-CoA kinase (202 aa).

One can recognise a DPCK domain in the interval A3–A201. Residue G11 to T16 participates in ATP binding.

Belongs to the CoaE family.

The protein localises to the cytoplasm. The enzyme catalyses 3'-dephospho-CoA + ATP = ADP + CoA + H(+). It participates in cofactor biosynthesis; coenzyme A biosynthesis; CoA from (R)-pantothenate: step 5/5. Catalyzes the phosphorylation of the 3'-hydroxyl group of dephosphocoenzyme A to form coenzyme A. This Burkholderia lata (strain ATCC 17760 / DSM 23089 / LMG 22485 / NCIMB 9086 / R18194 / 383) protein is Dephospho-CoA kinase.